The primary structure comprises 348 residues: Selenide, water dikinase (348 aa).

C17 is a catalytic residue. Residues K20 and 47 to 49 (THD) contribute to the ATP site. D50 provides a ligand contact to Mg(2+). ATP contacts are provided by residues D67, D90, and 138-140 (GHT). D90 lines the Mg(2+) pocket. Mg(2+) is bound at residue D226.

The protein belongs to the selenophosphate synthase 1 family. Class I subfamily. Homodimer. It depends on Mg(2+) as a cofactor.

It catalyses the reaction hydrogenselenide + ATP + H2O = selenophosphate + AMP + phosphate + 2 H(+). Functionally, synthesizes selenophosphate from selenide and ATP. This chain is Selenide, water dikinase, found in Porphyromonas gingivalis (strain ATCC 33277 / DSM 20709 / CIP 103683 / JCM 12257 / NCTC 11834 / 2561).